The chain runs to 405 residues: Bifunctional enzyme IspD/IspF (405 aa).

A 2-C-methyl-D-erythritol 4-phosphate cytidylyltransferase region spans residues 1 to 246 (MLQMPSKQPI…KLSASLLPDV (246 aa)). Positions 247 to 405 (RTGNGYDVHQ…TATVVYRGRT (159 aa)) are 2-C-methyl-D-erythritol 2,4-cyclodiphosphate synthase. A divalent metal cation contacts are provided by Asp253 and His255. 4-CDP-2-C-methyl-D-erythritol 2-phosphate is bound by residues 253–255 (DVH) and 279–280 (HS). An a divalent metal cation-binding site is contributed by His287. Residues 301-303 (DIG), 377-380 (TTNE), Phe384, and Arg387 each bind 4-CDP-2-C-methyl-D-erythritol 2-phosphate.

The protein in the N-terminal section; belongs to the IspD/TarI cytidylyltransferase family. IspD subfamily. In the C-terminal section; belongs to the IspF family. It depends on a divalent metal cation as a cofactor.

It catalyses the reaction 2-C-methyl-D-erythritol 4-phosphate + CTP + H(+) = 4-CDP-2-C-methyl-D-erythritol + diphosphate. The catalysed reaction is 4-CDP-2-C-methyl-D-erythritol 2-phosphate = 2-C-methyl-D-erythritol 2,4-cyclic diphosphate + CMP. It functions in the pathway isoprenoid biosynthesis; isopentenyl diphosphate biosynthesis via DXP pathway; isopentenyl diphosphate from 1-deoxy-D-xylulose 5-phosphate: step 2/6. It participates in isoprenoid biosynthesis; isopentenyl diphosphate biosynthesis via DXP pathway; isopentenyl diphosphate from 1-deoxy-D-xylulose 5-phosphate: step 4/6. In terms of biological role, bifunctional enzyme that catalyzes the formation of 4-diphosphocytidyl-2-C-methyl-D-erythritol from CTP and 2-C-methyl-D-erythritol 4-phosphate (MEP) (IspD), and catalyzes the conversion of 4-diphosphocytidyl-2-C-methyl-D-erythritol 2-phosphate (CDP-ME2P) to 2-C-methyl-D-erythritol 2,4-cyclodiphosphate (ME-CPP) with a corresponding release of cytidine 5-monophosphate (CMP) (IspF). The polypeptide is Bifunctional enzyme IspD/IspF (Rhizobium etli (strain CIAT 652)).